Consider the following 121-residue polypeptide: Somatostatin-1 (121 aa).

The N-terminal stretch at 1 to 24 is a signal peptide; the sequence is MKMVSSSRLRCLLVLLLSLTASIS. A propeptide spanning residues 25-105 is cleaved from the precursor; the sequence is CSFAGQRDSK…SGGPLLAPRE (81 aa). Residues 76–99 are disordered; sequence NFPLAEGGPEDAHADLERAASGGP. C110 and C121 are disulfide-bonded.

It belongs to the somatostatin family.

It is found in the secreted. Functionally, somatostatin inhibits the release of somatotropin. In Lophius americanus (American angler), this protein is Somatostatin-1 (sst1).